Reading from the N-terminus, the 382-residue chain is Opsin Rh3 (382 aa).

The Extracellular segment spans residues 1–56; sequence MEYHNVSSVLGNVSSVLRPDARLSAESRLLGWNVPPDELRHIPEHWLIYPEPPESM. N-linked (GlcNAc...) asparagine glycosylation occurs at Asn12. Residues 57–81 form a helical membrane-spanning segment; it reads NYLLGTLYIFFTVISMIGNGLVMWV. The Cytoplasmic portion of the chain corresponds to 82–93; it reads FSAAKSLRTPSN. The chain crosses the membrane as a helical span at residues 94-118; that stretch reads ILVINLAFCDFMMMIKTPIFIYNSF. The Extracellular segment spans residues 119–132; it reads HQGYALGHLGCQIF. Cysteines 129 and 206 form a disulfide. The chain crosses the membrane as a helical span at residues 133–152; it reads GVIGSYTGIAAGATNAFIAY. Over 153-170 the chain is Cytoplasmic; sequence DRYNVITRPMEGKMTHGK. A helical membrane pass occupies residues 171-195; sequence AIAMIIFIYLYATPWVVACYTESWG. Over 196-219 the chain is Extracellular; it reads RFVPEGYLTSCTFDYLTDNFDTRL. Residues 220–247 form a helical membrane-spanning segment; sequence FVACIFFFSFVCPTTMITYYYSQIVGHV. Topologically, residues 248-283 are cytoplasmic; sequence FSHEKALRDQAKKMNVDSLRSNVDKSKEAAEIRIAK. The chain crosses the membrane as a helical span at residues 284–307; sequence AAITICFLFFASWTPYGVMSLIGA. The Extracellular portion of the chain corresponds to 308–315; it reads FGDKTLLT. Residues 316–340 form a helical membrane-spanning segment; sequence PGATMIPACTCKMVACIDPFVYAIS. Lys327 is modified (N6-(retinylidene)lysine). At 341-382 the chain is on the cytoplasmic side; sequence HPRYRMELQKRCPWLAISEKAPESAAAISTSTTQEQQQTTAA.

This sequence belongs to the G-protein coupled receptor 1 family. Opsin subfamily. In terms of processing, phosphorylated on some or all of the serine and threonine residues present in the C-terminal region.

Its subcellular location is the membrane. Visual pigments are the light-absorbing molecules that mediate vision. They consist of an apoprotein, opsin, covalently linked to cis-retinal. The chain is Opsin Rh3 (Rh3) from Drosophila pseudoobscura pseudoobscura (Fruit fly).